The primary structure comprises 306 residues: Acetyl-coenzyme A carboxylase carboxyl transferase subunit beta (306 aa).

Positions 27–296 (LWHKCPSCEA…PKFVAAPIEP (270 aa)) constitute a CoA carboxyltransferase N-terminal domain. Positions 31, 34, 50, and 53 each coordinate Zn(2+). The C4-type zinc finger occupies 31–53 (CPSCEAVLYRPELEKTLDVCPKC).

This sequence belongs to the AccD/PCCB family. Acetyl-CoA carboxylase is a heterohexamer composed of biotin carboxyl carrier protein (AccB), biotin carboxylase (AccC) and two subunits each of ACCase subunit alpha (AccA) and ACCase subunit beta (AccD). Requires Zn(2+) as cofactor.

Its subcellular location is the cytoplasm. The catalysed reaction is N(6)-carboxybiotinyl-L-lysyl-[protein] + acetyl-CoA = N(6)-biotinyl-L-lysyl-[protein] + malonyl-CoA. The protein operates within lipid metabolism; malonyl-CoA biosynthesis; malonyl-CoA from acetyl-CoA: step 1/1. Functionally, component of the acetyl coenzyme A carboxylase (ACC) complex. Biotin carboxylase (BC) catalyzes the carboxylation of biotin on its carrier protein (BCCP) and then the CO(2) group is transferred by the transcarboxylase to acetyl-CoA to form malonyl-CoA. The polypeptide is Acetyl-coenzyme A carboxylase carboxyl transferase subunit beta (Pseudomonas fluorescens (strain Pf0-1)).